The sequence spans 188 residues: PRA1 family protein F3 (188 aa).

4 consecutive transmembrane segments (helical) span residues 74-94, 95-115, 123-143, and 145-165; these read IVVLIVIFFSLIWHPTSLIVF, TVLVVVWIFLYFLRDEPIKLF, TVLIVLSVLTVVLLLLTNATF, and IVGALVTGAVLVLIHSVVRKT.

Belongs to the PRA1 family. As to quaternary structure, interacts with PRA1F2 and PRA1D. Interacts with ACD11 and BPA1. Expressed in lateral roots, lateral root caps and columella cells.

It localises to the endoplasmic reticulum membrane. It is found in the membrane. Its subcellular location is the cytoplasm. Its function is as follows. May be involved in both secretory and endocytic intracellular trafficking in the endosomal/prevacuolar compartments. In Arabidopsis thaliana (Mouse-ear cress), this protein is PRA1 family protein F3.